Reading from the N-terminus, the 130-residue chain is Glycoprotein hormone beta-5 (130 aa).

Positions 1–24 (MKLAFLFLGPMALLLLAGYGCVLG) are cleaved as a signal peptide. 5 disulfide bridges follow: C36-C84, C50-C99, C60-C115, C64-C117, and C120-C127. N87 is a glycosylation site (N-linked (GlcNAc...) asparagine).

Belongs to the glycoprotein hormones subunit beta family. Heterodimer with GPHA2; this heterodimer interacts with thyroid-stimulating hormone receptor (TSHR), and hence stimulates cAMP production. In terms of processing, N-glycosylated. In terms of tissue distribution, highly expressed in brain and at low levels in pituitary. Also found in retina, testis and skin but not in pancreas, parotid, kidney, stomach, liver, colon, small intestine, thyroid, brain or adrenal gland. In pituitary, colocalizes with ACTH, suggesting that it is located in corticotrophs.

It localises to the secreted. Its function is as follows. Functions as a heterodimeric glycoprotein hormone with GPHA2 able to bind and activate the thyroid-stimulating hormone receptor (TSHR), leading to increased cAMP production. Plays a central role in controlling thyroid cell metabolism. In Homo sapiens (Human), this protein is Glycoprotein hormone beta-5 (GPHB5).